The following is a 279-amino-acid chain: Cell death abnormality protein 2 (279 aa).

Residues 14–115 form the SH2 domain; it reads FYFPGMSREE…EASLLAAYKK (102 aa). In terms of domain architecture, SH3 1 spans 116–176; the sequence is PIIEVVVGTF…PANYVQIQME (61 aa). Residues 181-213 are disordered; sequence RTSKGASQSSIGSSGGGAERFSSASTSSDNIEL. The span at 202–211 shows a compositional bias: polar residues; sequence SSASTSSDNI. In terms of domain architecture, SH3 2 spans 214–277; sequence QPRLPAKAKV…PHTYLRFTAV (64 aa).

This sequence belongs to the CRK family. In terms of assembly, interacts with ced-5 (via C-terminus which contains a candidate SH3-binding, proline-rich region). Forms a ternary complex with ced-5 and ced-12. Interacts (via SH2 domain) with src-1 (when activated and phosphorylated at 'Tyr-416').

Functionally, required for cell migration and engulfment of cell corpses but not for programmed cell death/apoptosis. Has a role in the migration of the 2 gonadal distal tip cells (DTCs). Plays a role in protecting dopaminergic neurons from oxidative stress-induced degeneration. The protein is Cell death abnormality protein 2 of Caenorhabditis elegans.